Reading from the N-terminus, the 212-residue chain is ATP-dependent Clp protease proteolytic subunit (212 aa).

Serine 106 serves as the catalytic Nucleophile. Histidine 131 is a catalytic residue.

This sequence belongs to the peptidase S14 family. In terms of assembly, fourteen ClpP subunits assemble into 2 heptameric rings which stack back to back to give a disk-like structure with a central cavity, resembling the structure of eukaryotic proteasomes.

Its subcellular location is the cytoplasm. It catalyses the reaction Hydrolysis of proteins to small peptides in the presence of ATP and magnesium. alpha-casein is the usual test substrate. In the absence of ATP, only oligopeptides shorter than five residues are hydrolyzed (such as succinyl-Leu-Tyr-|-NHMec, and Leu-Tyr-Leu-|-Tyr-Trp, in which cleavage of the -Tyr-|-Leu- and -Tyr-|-Trp bonds also occurs).. Cleaves peptides in various proteins in a process that requires ATP hydrolysis. Has a chymotrypsin-like activity. Plays a major role in the degradation of misfolded proteins. This is ATP-dependent Clp protease proteolytic subunit from Rhodopseudomonas palustris (strain HaA2).